We begin with the raw amino-acid sequence, 83 residues long: CDC42 small effector protein 2 (83 aa).

Residues cysteine 10 and cysteine 11 are each lipidated (S-palmitoyl cysteine). In terms of domain architecture, CRIB spans 28 to 41; that stretch reads IGEPTNFVHTAHVG. 2 positions are modified to phosphoserine: serine 42 and serine 51.

Belongs to the CDC42SE/SPEC family. Interacts with CDC42 (in GTP-bound form). Interacts weakly with RAC1 and not at all with RHOA.

It localises to the cytoplasm. The protein resides in the cytoskeleton. It is found in the cell membrane. The protein localises to the cell projection. Its subcellular location is the phagocytic cup. In terms of biological role, probably involved in the organization of the actin cytoskeleton by acting downstream of CDC42, inducing actin filament assembly. Alters CDC42-induced cell shape changes. In activated T-cells, may play a role in CDC42-mediated F-actin accumulation at the immunological synapse. May play a role in early contractile events in phagocytosis in macrophages. In Rattus norvegicus (Rat), this protein is CDC42 small effector protein 2 (Cdc42se2).